The sequence spans 637 residues: Biosynthetic arginine decarboxylase (637 aa).

N6-(pyridoxal phosphate)lysine is present on K101. F286–Y296 lines the substrate pocket.

This sequence belongs to the Orn/Lys/Arg decarboxylase class-II family. SpeA subfamily. The cofactor is Mg(2+). Requires pyridoxal 5'-phosphate as cofactor.

The enzyme catalyses L-arginine + H(+) = agmatine + CO2. Its pathway is amine and polyamine biosynthesis; agmatine biosynthesis; agmatine from L-arginine: step 1/1. In terms of biological role, catalyzes the biosynthesis of agmatine from arginine. This chain is Biosynthetic arginine decarboxylase, found in Shewanella loihica (strain ATCC BAA-1088 / PV-4).